Reading from the N-terminus, the 182-residue chain is Large ribosomal subunit protein uL5 (182 aa).

This sequence belongs to the universal ribosomal protein uL5 family. Part of the 50S ribosomal subunit; part of the 5S rRNA/L5/L18/L25 subcomplex. Contacts the 5S rRNA and the P site tRNA. Forms a bridge to the 30S subunit in the 70S ribosome.

This is one of the proteins that bind and probably mediate the attachment of the 5S RNA into the large ribosomal subunit, where it forms part of the central protuberance. In the 70S ribosome it contacts protein S13 of the 30S subunit (bridge B1b), connecting the 2 subunits; this bridge is implicated in subunit movement. Contacts the P site tRNA; the 5S rRNA and some of its associated proteins might help stabilize positioning of ribosome-bound tRNAs. The protein is Large ribosomal subunit protein uL5 of Nostoc sp. (strain PCC 7120 / SAG 25.82 / UTEX 2576).